A 185-amino-acid chain; its full sequence is uncharacterized protein (185 aa).

N-acetylmethionine is present on M1. 3 stretches are compositionally biased toward basic and acidic residues: residues 1-18, 26-47, and 59-71; these read MDAF…QDKQ, TPSD…TTEE, and SNED…PVLE. 2 disordered regions span residues 1-71 and 155-185; these read MDAF…PVLE and DHDR…DGLL. Over residues 170-185 the composition is skewed to acidic residues; that stretch reads LPEELETDQDFLDGLL.

This is an uncharacterized protein from Saccharomyces cerevisiae (strain ATCC 204508 / S288c) (Baker's yeast).